The following is a 197-amino-acid chain: Elongation factor Ts (197 aa).

The interval 81-84 (TDFV) is involved in Mg(2+) ion dislocation from EF-Tu.

The protein belongs to the EF-Ts family.

It localises to the cytoplasm. In terms of biological role, associates with the EF-Tu.GDP complex and induces the exchange of GDP to GTP. It remains bound to the aminoacyl-tRNA.EF-Tu.GTP complex up to the GTP hydrolysis stage on the ribosome. This is Elongation factor Ts from Fervidobacterium nodosum (strain ATCC 35602 / DSM 5306 / Rt17-B1).